The sequence spans 218 residues: Elongation factor Ts (218 aa).

Residues 82 to 85 (TDFV) are involved in Mg(2+) ion dislocation from EF-Tu.

The protein belongs to the EF-Ts family.

The protein resides in the cytoplasm. Associates with the EF-Tu.GDP complex and induces the exchange of GDP to GTP. It remains bound to the aminoacyl-tRNA.EF-Tu.GTP complex up to the GTP hydrolysis stage on the ribosome. This is Elongation factor Ts from Picosynechococcus sp. (strain ATCC 27264 / PCC 7002 / PR-6) (Agmenellum quadruplicatum).